A 368-amino-acid polypeptide reads, in one-letter code: Glutamate 5-kinase (368 aa).

Lys9 contacts ATP. 3 residues coordinate substrate: Ser49, Asp136, and Asn148. Residues 168 to 169 and 210 to 216 each bind ATP; these read TD and TGGMMTK. Residues 275 to 353 enclose the PUA domain; it reads AGIITIDNGA…ADIENVLGYE (79 aa).

It belongs to the glutamate 5-kinase family.

Its subcellular location is the cytoplasm. It catalyses the reaction L-glutamate + ATP = L-glutamyl 5-phosphate + ADP. The protein operates within amino-acid biosynthesis; L-proline biosynthesis; L-glutamate 5-semialdehyde from L-glutamate: step 1/2. Its function is as follows. Catalyzes the transfer of a phosphate group to glutamate to form L-glutamate 5-phosphate. The chain is Glutamate 5-kinase from Haemophilus influenzae (strain PittEE).